The following is a 274-amino-acid chain: MQFSKMHGLGNDFMVVDAVTQNVFFSPELIRRLADRHLGVGFDQLLVVEPPYDPELDFHYRIFNADGSEVAQCGNGARCFARFVRLKGLTNKRDIRVSTANGRMVLTVTDDDLVRVNMGEPNFEPSAVPFRANKAEKTYIMRAAEQTILCGVVSMGNPHCVIQVDDVDTAAVETLGPVLESHERFPERANIGFMQVVKREHIRLRVFERGAGETQACGSGACAAVAVGIQQGLLAEEVRVELPGGRLDIAWKGPGHPLYMTGPAVHVYDGFIHL.

Positions 11, 44, and 64 each coordinate substrate. The active-site Proton donor is the Cys-73. Residues Gly-74–Asn-75, Asn-157, Asn-190, and Glu-208–Arg-209 each bind substrate. Cys-217 acts as the Proton acceptor in catalysis. Substrate is bound at residue Gly-218–Ser-219.

It belongs to the diaminopimelate epimerase family. In terms of assembly, homodimer.

The protein localises to the cytoplasm. The catalysed reaction is (2S,6S)-2,6-diaminopimelate = meso-2,6-diaminopimelate. Its pathway is amino-acid biosynthesis; L-lysine biosynthesis via DAP pathway; DL-2,6-diaminopimelate from LL-2,6-diaminopimelate: step 1/1. Catalyzes the stereoinversion of LL-2,6-diaminopimelate (L,L-DAP) to meso-diaminopimelate (meso-DAP), a precursor of L-lysine and an essential component of the bacterial peptidoglycan. This chain is Diaminopimelate epimerase, found in Escherichia coli O127:H6 (strain E2348/69 / EPEC).